Consider the following 138-residue polypeptide: Translation initiation factor 5A (138 aa).

K37 bears the Hypusine mark.

The protein belongs to the eIF-5A family.

It localises to the cytoplasm. Functionally, functions by promoting the formation of the first peptide bond. The protein is Translation initiation factor 5A of Pyrococcus furiosus (strain ATCC 43587 / DSM 3638 / JCM 8422 / Vc1).